The primary structure comprises 586 residues: Ferredoxin--nitrite reductase, chloroplastic (586 aa).

Low complexity predominate over residues 1–18 (MTSFSLTFTSPLLPSSST). The tract at residues 1–20 (MTSFSLTFTSPLLPSSSTKP) is disordered. Residues 1-25 (MTSFSLTFTSPLLPSSSTKPKRSVL) constitute a chloroplast transit peptide. Lysine 103 participates in a covalent cross-link: Glycyl lysine isopeptide (Lys-Gly) (interchain with G-Cter in ubiquitin). 4 residues coordinate [4Fe-4S] cluster: cysteine 464, cysteine 470, cysteine 505, and cysteine 509. Residue cysteine 509 coordinates siroheme.

The protein belongs to the nitrite and sulfite reductase 4Fe-4S domain family. As to quaternary structure, monomer. Requires siroheme as cofactor. The cofactor is [4Fe-4S] cluster.

The protein localises to the plastid. It is found in the chloroplast. It carries out the reaction 6 oxidized [2Fe-2S]-[ferredoxin] + NH4(+) + 2 H2O = nitrite + 6 reduced [2Fe-2S]-[ferredoxin] + 8 H(+). The protein operates within nitrogen metabolism; nitrate reduction (assimilation). Functionally, catalyzes the six-electron reduction of nitrite to ammonium. This chain is Ferredoxin--nitrite reductase, chloroplastic (NIR1), found in Arabidopsis thaliana (Mouse-ear cress).